The following is a 415-amino-acid chain: Sensor protein kinase WalK (415 aa).

The 53-residue stretch at 11–63 folds into the HAMP domain; it reads RTITKPITDMRNQTVEMSRGNYTQRVKIYGNDEIGELALAFNNLSKRVQEAQA. The PAS domain occupies 68–138; that stretch reads EKRRLDSVIT…EIQENNDSFL (71 aa). Histidine 78, aspartate 81, histidine 171, and glutamate 175 together coordinate Zn(2+). The 65-residue stretch at 121 to 185 folds into the PAC domain; sequence LEDEFKLEEI…QQQVERERRE (65 aa). A Histidine kinase domain is found at 189 to 407; it reads NVSHELRTPL…SIFITLPCEV (219 aa). Residue histidine 192 is modified to Phosphohistidine; by autocatalysis.

As to quaternary structure, forms homodimers. Forms homooligomers. Requires NH4(+) as cofactor. Autophosphorylated.

The protein resides in the cell membrane. It catalyses the reaction ATP + protein L-histidine = ADP + protein N-phospho-L-histidine.. With respect to regulation, by zinc. Zinc-binding negatively regulates WalK kinase activity and thus autophosphorylation. In terms of biological role, member of the two-component regulatory system WalK/WalR that regulates genes involved in cell wall metabolism, virulence regulation, biofilm production, oxidative stress resistance and antibiotic resistance via direct or indirect regulation of autolysins. Functions as a sensor protein kinase which is autophosphorylated at a histidine residue in the dimerization domain and transfers its phosphate group to the conserved aspartic acid residue in the regulatory domain of WalR. In turn, WalR binds to the upstream promoter regions of the target genes to positively and negatively regulate their expression. In Staphylococcus aureus, this protein is Sensor protein kinase WalK (walK).